The chain runs to 112 residues: Large ribosomal subunit protein eL30y (112 aa).

Belongs to the eukaryotic ribosomal protein eL30 family.

The protein is Large ribosomal subunit protein eL30y (RPL30B) of Arabidopsis thaliana (Mouse-ear cress).